We begin with the raw amino-acid sequence, 341 residues long: Solute carrier family 25 member 43 (341 aa).

3 Solcar repeats span residues 11 to 101 (TGSQ…MDDL), 105 to 185 (SQWS…LLVY), and 200 to 298 (SHLQ…LYQN). Helical transmembrane passes span 16–36 (LLCA…LELA), 68–88 (LWKG…VQLA), 110–130 (IVTG…TDLI), 166–186 (GVSL…LVYM), 205–225 (FANV…FDTV), and 262–282 (VLGL…YFGV).

The protein belongs to the mitochondrial carrier (TC 2.A.29) family.

It localises to the mitochondrion inner membrane. This Mus musculus (Mouse) protein is Solute carrier family 25 member 43 (Slc25a43).